The following is a 239-amino-acid chain: Ribonuclease PH (239 aa).

Residues Arg86 and 124–126 (GTR) each bind phosphate.

The protein belongs to the RNase PH family. As to quaternary structure, homohexameric ring arranged as a trimer of dimers.

It catalyses the reaction tRNA(n+1) + phosphate = tRNA(n) + a ribonucleoside 5'-diphosphate. In terms of biological role, phosphorolytic 3'-5' exoribonuclease that plays an important role in tRNA 3'-end maturation. Removes nucleotide residues following the 3'-CCA terminus of tRNAs; can also add nucleotides to the ends of RNA molecules by using nucleoside diphosphates as substrates, but this may not be physiologically important. Probably plays a role in initiation of 16S rRNA degradation (leading to ribosome degradation) during starvation. This chain is Ribonuclease PH, found in Anaeromyxobacter dehalogenans (strain 2CP-1 / ATCC BAA-258).